We begin with the raw amino-acid sequence, 429 residues long: Kynureninase (429 aa).

Residues Leu-109, Thr-110, 137-140 (FPSD), Asp-222, His-225, and Tyr-247 each bind pyridoxal 5'-phosphate. Lys-248 is subject to N6-(pyridoxal phosphate)lysine. Pyridoxal 5'-phosphate contacts are provided by Trp-278 and Asn-306.

This sequence belongs to the kynureninase family. As to quaternary structure, homodimer. Requires pyridoxal 5'-phosphate as cofactor.

The catalysed reaction is L-kynurenine + H2O = anthranilate + L-alanine + H(+). The enzyme catalyses 3-hydroxy-L-kynurenine + H2O = 3-hydroxyanthranilate + L-alanine + H(+). It functions in the pathway amino-acid degradation; L-kynurenine degradation; L-alanine and anthranilate from L-kynurenine: step 1/1. It participates in cofactor biosynthesis; NAD(+) biosynthesis; quinolinate from L-kynurenine: step 2/3. In terms of biological role, catalyzes the cleavage of L-kynurenine (L-Kyn) and L-3-hydroxykynurenine (L-3OHKyn) into anthranilic acid (AA) and 3-hydroxyanthranilic acid (3-OHAA), respectively. This Salinispora tropica (strain ATCC BAA-916 / DSM 44818 / JCM 13857 / NBRC 105044 / CNB-440) protein is Kynureninase.